The sequence spans 119 residues: DNA-binding protein inhibitor ID-3 (119 aa).

Positions 28–80 (RGKGPAAEEPLSLLDDMNHCYSRLRELVPGVPRGTQLSQVEILQRVIDYILDL) constitute a bHLH domain.

Homodimer, and heterodimer with other HLH proteins. Interacts with COPS5 and COPS7A. Interacts with IFI204. Interacts with GATA4 and NKX2-5. Interacts with ANKRD2; both proteins cooperate in myoblast differentiation. Interacts with CLOCK and BMAL1. Expressed abundantly in lung, kidney and adrenal gland, but not in adult brain.

The protein resides in the nucleus. Its function is as follows. Transcriptional regulator (lacking a basic DNA binding domain) which negatively regulates the basic helix-loop-helix (bHLH) transcription factors by forming heterodimers and inhibiting their DNA binding and transcriptional activity. Implicated in regulating a variety of cellular processes, including cellular growth, senescence, differentiation, apoptosis, angiogenesis, and neoplastic transformation. Involved in myogenesis by inhibiting skeletal muscle and cardiac myocyte differentiation and promoting muscle precursor cells proliferation. Inhibits the binding of E2A-containing protein complexes to muscle creatine kinase E-box enhancer. Regulates the circadian clock by repressing the transcriptional activator activity of the CLOCK-BMAL1 heterodimer. This Homo sapiens (Human) protein is DNA-binding protein inhibitor ID-3 (ID3).